Consider the following 174-residue polypeptide: Shikimate kinase 2 (174 aa).

12–17 (GAGKTT) is an ATP binding site. 2 residues coordinate Mg(2+): Thr-16 and Asp-32. Residues Asp-34, Arg-58, and Gly-79 each contribute to the substrate site. Residues 112–126 (MQQPESTQRPSLTGK) form an LID domain region. Residue Arg-120 coordinates ATP. Arg-139 is a binding site for substrate.

Belongs to the shikimate kinase family. AroL subfamily. As to quaternary structure, monomer. Requires Mg(2+) as cofactor.

The protein resides in the cytoplasm. It carries out the reaction shikimate + ATP = 3-phosphoshikimate + ADP + H(+). The protein operates within metabolic intermediate biosynthesis; chorismate biosynthesis; chorismate from D-erythrose 4-phosphate and phosphoenolpyruvate: step 5/7. Functionally, catalyzes the specific phosphorylation of the 3-hydroxyl group of shikimic acid using ATP as a cosubstrate. The protein is Shikimate kinase 2 of Photorhabdus laumondii subsp. laumondii (strain DSM 15139 / CIP 105565 / TT01) (Photorhabdus luminescens subsp. laumondii).